The sequence spans 310 residues: Homoserine kinase (310 aa).

91 to 101 provides a ligand contact to ATP; that stretch reads PIGSGLGSSAC.

This sequence belongs to the GHMP kinase family. Homoserine kinase subfamily.

The protein localises to the cytoplasm. It catalyses the reaction L-homoserine + ATP = O-phospho-L-homoserine + ADP + H(+). It functions in the pathway amino-acid biosynthesis; L-threonine biosynthesis; L-threonine from L-aspartate: step 4/5. Catalyzes the ATP-dependent phosphorylation of L-homoserine to L-homoserine phosphate. The protein is Homoserine kinase of Escherichia coli (strain SMS-3-5 / SECEC).